Reading from the N-terminus, the 525-residue chain is Probable lipid II flippase MurJ (525 aa).

14 helical membrane passes run 10–30 (LLKS…LGLV), 32–52 (DVVV…FFAN), 100–120 (VLVT…TALF), 140–160 (LASL…FVAL), 171–191 (FAVS…CAWY), 203–223 (LAIG…PFLI), 247–267 (MIPA…DSFV), 285–305 (LLEF…LPAL), 330–350 (FLGI…LMVL), 368–388 (LLAY…APGY), 402–422 (IIAM…YGYV), 423–443 (GLAV…YRGL), 455–475 (TVWF…ALLW), and 495–515 (LTGL…LLGV).

The protein belongs to the MurJ/MviN family.

Its subcellular location is the cell inner membrane. Its pathway is cell wall biogenesis; peptidoglycan biosynthesis. Involved in peptidoglycan biosynthesis. Transports lipid-linked peptidoglycan precursors from the inner to the outer leaflet of the cytoplasmic membrane. The polypeptide is Probable lipid II flippase MurJ (Vibrio cholerae serotype O1 (strain ATCC 39315 / El Tor Inaba N16961)).